Reading from the N-terminus, the 68-residue chain is Large ribosomal subunit protein bL31 (68 aa).

Cys-16, Cys-18, Cys-37, and Cys-40 together coordinate Zn(2+).

The protein belongs to the bacterial ribosomal protein bL31 family. Type A subfamily. Part of the 50S ribosomal subunit. The cofactor is Zn(2+).

Functionally, binds the 23S rRNA. In Nitrosococcus oceani (strain ATCC 19707 / BCRC 17464 / JCM 30415 / NCIMB 11848 / C-107), this protein is Large ribosomal subunit protein bL31.